The following is a 73-amino-acid chain: Putative sodium channel toxin Ts39 (73 aa).

The N-terminal stretch at 1–22 is a signal peptide; sequence MKTLNFCLFLVIISSLTVRVFC. Residues 24 to 73 form the LCN-type CS-alpha/beta domain; the sequence is NDRFLTVNDNYVICLYINKSFVNCENLCKAYMNAKDGFCRQPHCFCTDVE. 3 cysteine pairs are disulfide-bonded: Cys37/Cys62, Cys47/Cys67, and Cys51/Cys69.

It belongs to the long (3 C-C) scorpion toxin superfamily. Sodium channel inhibitor family. As to expression, expressed by the venom gland.

The protein resides in the secreted. Functionally, putative sodium channel toxin. The polypeptide is Putative sodium channel toxin Ts39 (Tityus serrulatus (Brazilian scorpion)).